The primary structure comprises 265 residues: Hydroxyethylthiazole kinase (265 aa).

Met-50 provides a ligand contact to substrate. ATP is bound by residues Arg-125 and Thr-171. Gly-198 lines the substrate pocket.

It belongs to the Thz kinase family. It depends on Mg(2+) as a cofactor.

It catalyses the reaction 5-(2-hydroxyethyl)-4-methylthiazole + ATP = 4-methyl-5-(2-phosphooxyethyl)-thiazole + ADP + H(+). The protein operates within cofactor biosynthesis; thiamine diphosphate biosynthesis; 4-methyl-5-(2-phosphoethyl)-thiazole from 5-(2-hydroxyethyl)-4-methylthiazole: step 1/1. Functionally, catalyzes the phosphorylation of the hydroxyl group of 4-methyl-5-beta-hydroxyethylthiazole (THZ). In Salmonella agona (strain SL483), this protein is Hydroxyethylthiazole kinase.